We begin with the raw amino-acid sequence, 404 residues long: Cysteine desulfurase IscS (404 aa).

Pyridoxal 5'-phosphate is bound by residues 75-76 (AT), Asn155, Gln183, and 203-205 (SSH). Lys206 carries the post-translational modification N6-(pyridoxal phosphate)lysine. Residue Thr243 participates in pyridoxal 5'-phosphate binding. The active-site Cysteine persulfide intermediate is the Cys328. [2Fe-2S] cluster is bound at residue Cys328.

Belongs to the class-V pyridoxal-phosphate-dependent aminotransferase family. NifS/IscS subfamily. Homodimer. Forms a heterotetramer with IscU, interacts with other sulfur acceptors. Pyridoxal 5'-phosphate is required as a cofactor.

It is found in the cytoplasm. It catalyses the reaction (sulfur carrier)-H + L-cysteine = (sulfur carrier)-SH + L-alanine. It functions in the pathway cofactor biosynthesis; iron-sulfur cluster biosynthesis. Functionally, master enzyme that delivers sulfur to a number of partners involved in Fe-S cluster assembly, tRNA modification or cofactor biosynthesis. Catalyzes the removal of elemental sulfur atoms from cysteine to produce alanine. Functions as a sulfur delivery protein for Fe-S cluster synthesis onto IscU, an Fe-S scaffold assembly protein, as well as other S acceptor proteins. The polypeptide is Cysteine desulfurase IscS (Pasteurella multocida (strain Pm70)).